We begin with the raw amino-acid sequence, 101 residues long: Stefin-C (101 aa).

An N-acetylmethionine modification is found at methionine 1. Residues 49 to 53 carry the Secondary area of contact motif; the sequence is QVVAG.

This sequence belongs to the cystatin family.

Its subcellular location is the cytoplasm. Functionally, strong inhibitor of papain and cathepsin L but poor inhibitor of cathepsin B. The protein is Stefin-C of Bos taurus (Bovine).